The sequence spans 200 residues: MTIVDAKFLQSAQSVNDSPAPNVAEVAFLGRSNVGKSSILNSLTSRNGLAKSSSTPGKTQLINYFEIKFKTKNEETPYLFARFVDLPGFGYAKVAKSLKAEWNKNLTGYLQLRPNLQIFVHLIDSRHPELEIDKNVDEFLKEIKRGDQIIVNAFTKIDKLNSSELSKLKRDYPDGIFLSNLKKRGIIDLQDKITGYLFGN.

Residues 22-199 (NVAEVAFLGR…QDKITGYLFG (178 aa)) enclose the EngB-type G domain. Residues 30–37 (GRSNVGKS), 57–61 (GKTQL), 85–88 (DLPG), 155–158 (TKID), and 177–180 (FLSN) contribute to the GTP site. The Mg(2+) site is built by Ser-37 and Thr-59.

This sequence belongs to the TRAFAC class TrmE-Era-EngA-EngB-Septin-like GTPase superfamily. EngB GTPase family. Mg(2+) serves as cofactor.

Functionally, necessary for normal cell division and for the maintenance of normal septation. The protein is Probable GTP-binding protein EngB of Aliarcobacter butzleri (strain RM4018) (Arcobacter butzleri).